The following is a 578-amino-acid chain: Probable acyl-activating enzyme 12, peroxisomal (578 aa).

The short motif at 576-578 is the Microbody targeting signal element; sequence SRL.

It belongs to the ATP-dependent AMP-binding enzyme family. In terms of tissue distribution, expressed at low levels in leaves.

Its subcellular location is the peroxisome. Its function is as follows. May act as an acid--thiol ligase that activates carboxylic acids by forming acyl-CoAs. This chain is Probable acyl-activating enzyme 12, peroxisomal (AAE12), found in Arabidopsis thaliana (Mouse-ear cress).